A 393-amino-acid polypeptide reads, in one-letter code: S-adenosylmethionine decarboxylase proenzyme (393 aa).

Catalysis depends on residues E11 and E14. Residue S71 is the Schiff-base intermediate with substrate; via pyruvic acid of the active site. S71 is subject to Pyruvic acid (Ser); by autocatalysis. C85 (proton donor; for catalytic activity) is an active-site residue. Catalysis depends on proton acceptor; for processing activity residues S236 and H249.

Belongs to the eukaryotic AdoMetDC family. The cofactor is pyruvate. In terms of processing, is synthesized initially as an inactive proenzyme. Formation of the active enzyme involves a self-maturation process in which the active site pyruvoyl group is generated from an internal serine residue via an autocatalytic post-translational modification. Two non-identical subunits are generated from the proenzyme in this reaction, and the pyruvate is formed at the N-terminus of the alpha chain, which is derived from the carboxyl end of the proenzyme. The post-translation cleavage follows an unusual pathway, termed non-hydrolytic serinolysis, in which the side chain hydroxyl group of the serine supplies its oxygen atom to form the C-terminus of the beta chain, while the remainder of the serine residue undergoes an oxidative deamination to produce ammonia and the pyruvoyl group blocking the N-terminus of the alpha chain.

The enzyme catalyses S-adenosyl-L-methionine + H(+) = S-adenosyl 3-(methylsulfanyl)propylamine + CO2. The protein operates within amine and polyamine biosynthesis; S-adenosylmethioninamine biosynthesis; S-adenosylmethioninamine from S-adenosyl-L-methionine: step 1/1. This is S-adenosylmethionine decarboxylase proenzyme (SAMDC) from Hordeum chilense (Barley).